Here is a 519-residue protein sequence, read N- to C-terminus: Histidine ammonia-lyase (519 aa).

Positions 146-148 form a cross-link, 5-imidazolinone (Ala-Gly); sequence ASG. The residue at position 147 (Ser147) is a 2,3-didehydroalanine (Ser).

The protein belongs to the PAL/histidase family. In terms of processing, contains an active site 4-methylidene-imidazol-5-one (MIO), which is formed autocatalytically by cyclization and dehydration of residues Ala-Ser-Gly.

It is found in the cytoplasm. The enzyme catalyses L-histidine = trans-urocanate + NH4(+). The protein operates within amino-acid degradation; L-histidine degradation into L-glutamate; N-formimidoyl-L-glutamate from L-histidine: step 1/3. The sequence is that of Histidine ammonia-lyase from Bradyrhizobium diazoefficiens (strain JCM 10833 / BCRC 13528 / IAM 13628 / NBRC 14792 / USDA 110).